Here is a 212-residue protein sequence, read N- to C-terminus: Peptide methionine sulfoxide reductase MsrA (212 aa).

The active site involves Cys-52.

It belongs to the MsrA Met sulfoxide reductase family.

It carries out the reaction L-methionyl-[protein] + [thioredoxin]-disulfide + H2O = L-methionyl-(S)-S-oxide-[protein] + [thioredoxin]-dithiol. It catalyses the reaction [thioredoxin]-disulfide + L-methionine + H2O = L-methionine (S)-S-oxide + [thioredoxin]-dithiol. In terms of biological role, has an important function as a repair enzyme for proteins that have been inactivated by oxidation. Catalyzes the reversible oxidation-reduction of methionine sulfoxide in proteins to methionine. In Shigella boydii serotype 4 (strain Sb227), this protein is Peptide methionine sulfoxide reductase MsrA.